Here is a 253-residue protein sequence, read N- to C-terminus: 2-dehydro-3-deoxy-D-gluconate 5-dehydrogenase (253 aa).

An NAD(+)-binding site is contributed by 14-38; the sequence is LITGCDTGLGQGMAVGLAEAGCDIV. Residue Ser145 coordinates substrate. The Proton acceptor role is filled by Tyr158.

It belongs to the short-chain dehydrogenases/reductases (SDR) family.

The catalysed reaction is 2-dehydro-3-deoxy-D-gluconate + NAD(+) = 3-deoxy-D-glycero-2,5-hexodiulosonate + NADH + H(+). Its pathway is glycan metabolism; pectin degradation; 2-dehydro-3-deoxy-D-gluconate from pectin: step 5/5. Functionally, catalyzes the reduction of 2,5-diketo-3-deoxygluconate (DKII or 4,6-dihydroxy-2,5-dioxohexanoate) into 2-keto-3-deoxygluconate (KDG or 2-dehydro-3-deoxygluconate) with a concomitant oxidation of NADH. This Dickeya dadantii (strain 3937) (Erwinia chrysanthemi (strain 3937)) protein is 2-dehydro-3-deoxy-D-gluconate 5-dehydrogenase (kduD).